Consider the following 519-residue polypeptide: 3-octaprenyl-4-hydroxybenzoate carboxy-lyase (519 aa).

Position 177 (asparagine 177) interacts with Mn(2+). Residues 180-182 (IYR), 194-196 (RWL), and 199-200 (RG) each bind prenylated FMN. A Mn(2+)-binding site is contributed by glutamate 243. The active-site Proton donor is aspartate 318.

Belongs to the UbiD family. As to quaternary structure, homohexamer. The cofactor is prenylated FMN. Mn(2+) is required as a cofactor.

The protein localises to the cell membrane. It catalyses the reaction a 4-hydroxy-3-(all-trans-polyprenyl)benzoate + H(+) = a 2-(all-trans-polyprenyl)phenol + CO2. It participates in cofactor biosynthesis; ubiquinone biosynthesis. Catalyzes the decarboxylation of 3-octaprenyl-4-hydroxy benzoate to 2-octaprenylphenol, an intermediate step in ubiquinone biosynthesis. The polypeptide is 3-octaprenyl-4-hydroxybenzoate carboxy-lyase (Burkholderia thailandensis (strain ATCC 700388 / DSM 13276 / CCUG 48851 / CIP 106301 / E264)).